Reading from the N-terminus, the 209-residue chain is Virulence factors putative positive transcription regulator BvgA (209 aa).

Residues 4–119 form the Response regulatory domain; the sequence is KVLIIDDHPV…EVINAAKAVM (116 aa). Position 54 is a 4-aspartylphosphate (aspartate 54). The HTH luxR-type domain maps to 142-207; it reads DSTLISVLSN…ELIDLAKRNN (66 aa). The H-T-H motif DNA-binding region spans 166-185; that stretch reads NKDIADSMFLSNKTVSTYKT.

In terms of assembly, homodimer. Phosphorylated by BvgS.

In terms of biological role, member of the two-component regulatory system BvgS/BvgA. Activates the transcription of virulence genes. The sequence is that of Virulence factors putative positive transcription regulator BvgA (bvgA) from Bordetella bronchiseptica (strain ATCC BAA-588 / NCTC 13252 / RB50) (Alcaligenes bronchisepticus).